The chain runs to 438 residues: Thymidine phosphorylase (438 aa).

The protein belongs to the thymidine/pyrimidine-nucleoside phosphorylase family. Homodimer.

It carries out the reaction thymidine + phosphate = 2-deoxy-alpha-D-ribose 1-phosphate + thymine. Its pathway is pyrimidine metabolism; dTMP biosynthesis via salvage pathway; dTMP from thymine: step 1/2. Its function is as follows. The enzymes which catalyze the reversible phosphorolysis of pyrimidine nucleosides are involved in the degradation of these compounds and in their utilization as carbon and energy sources, or in the rescue of pyrimidine bases for nucleotide synthesis. The polypeptide is Thymidine phosphorylase (Burkholderia orbicola (strain AU 1054)).